A 209-amino-acid chain; its full sequence is Uracil phosphoribosyltransferase (209 aa).

5-phospho-alpha-D-ribose 1-diphosphate-binding positions include R79, R104, and 131 to 139; that span reads DPMLATGGS. Uracil is bound by residues I194 and 199 to 201; that span reads GDA. D200 contacts 5-phospho-alpha-D-ribose 1-diphosphate.

It belongs to the UPRTase family. Requires Mg(2+) as cofactor.

The catalysed reaction is UMP + diphosphate = 5-phospho-alpha-D-ribose 1-diphosphate + uracil. It participates in pyrimidine metabolism; UMP biosynthesis via salvage pathway; UMP from uracil: step 1/1. With respect to regulation, allosterically activated by GTP. Functionally, catalyzes the conversion of uracil and 5-phospho-alpha-D-ribose 1-diphosphate (PRPP) to UMP and diphosphate. The chain is Uracil phosphoribosyltransferase from Alkaliphilus oremlandii (strain OhILAs) (Clostridium oremlandii (strain OhILAs)).